Here is a 284-residue protein sequence, read N- to C-terminus: Bifunctional protein FolD (284 aa).

NADP(+) is bound by residues 166-168 (GAS) and Ile232.

This sequence belongs to the tetrahydrofolate dehydrogenase/cyclohydrolase family. Homodimer.

It carries out the reaction (6R)-5,10-methylene-5,6,7,8-tetrahydrofolate + NADP(+) = (6R)-5,10-methenyltetrahydrofolate + NADPH. The catalysed reaction is (6R)-5,10-methenyltetrahydrofolate + H2O = (6R)-10-formyltetrahydrofolate + H(+). The protein operates within one-carbon metabolism; tetrahydrofolate interconversion. Catalyzes the oxidation of 5,10-methylenetetrahydrofolate to 5,10-methenyltetrahydrofolate and then the hydrolysis of 5,10-methenyltetrahydrofolate to 10-formyltetrahydrofolate. This chain is Bifunctional protein FolD, found in Shewanella sp. (strain ANA-3).